The primary structure comprises 485 residues: D-alanine--D-alanyl carrier protein ligase (485 aa).

Residue 144–145 participates in ATP binding; the sequence is TS. Asp-189 lines the D-alanine pocket. 284-289 lines the ATP pocket; the sequence is NTYGPT. Val-293 is a D-alanine binding site. The ATP site is built by Asp-365 and Lys-473. Lys-473 serves as a coordination point for D-alanine.

It belongs to the ATP-dependent AMP-binding enzyme family. DltA subfamily.

It is found in the cytoplasm. The enzyme catalyses holo-[D-alanyl-carrier protein] + D-alanine + ATP = D-alanyl-[D-alanyl-carrier protein] + AMP + diphosphate. It functions in the pathway cell wall biogenesis; lipoteichoic acid biosynthesis. Its function is as follows. Catalyzes the first step in the D-alanylation of lipoteichoic acid (LTA), the activation of D-alanine and its transfer onto the D-alanyl carrier protein (Dcp) DltC. In an ATP-dependent two-step reaction, forms a high energy D-alanyl-AMP intermediate, followed by transfer of the D-alanyl residue as a thiol ester to the phosphopantheinyl prosthetic group of the Dcp. D-alanylation of LTA plays an important role in modulating the properties of the cell wall in Gram-positive bacteria, influencing the net charge of the cell wall. This Staphylococcus aureus (strain USA300) protein is D-alanine--D-alanyl carrier protein ligase.